Reading from the N-terminus, the 347-residue chain is 4-hydroxy-2-oxovalerate aldolase 1 (347 aa).

The Pyruvate carboxyltransferase domain maps to 11–263 (VVLHDMCLRD…ETGVDLFKLM (253 aa)). 19–20 (RD) is a substrate binding site. A Mn(2+)-binding site is contributed by aspartate 20. Residue histidine 23 is the Proton acceptor of the active site. 2 residues coordinate substrate: serine 173 and histidine 202. Mn(2+) contacts are provided by histidine 202 and histidine 204. Tyrosine 293 lines the substrate pocket.

Belongs to the 4-hydroxy-2-oxovalerate aldolase family.

The enzyme catalyses (S)-4-hydroxy-2-oxopentanoate = acetaldehyde + pyruvate. The polypeptide is 4-hydroxy-2-oxovalerate aldolase 1 (lapG) (Azoarcus sp. (strain BH72)).